The following is a 305-amino-acid chain: UDP-N-acetylenolpyruvoylglucosamine reductase 2 (305 aa).

The region spanning 33 to 197 (VGGKADVFVA…LEARFELEEG (165 aa)) is the FAD-binding PCMH-type domain. Arg-176 is an active-site residue. Ser-226 functions as the Proton donor in the catalytic mechanism. Glu-296 is an active-site residue.

This sequence belongs to the MurB family. Requires FAD as cofactor.

Its subcellular location is the cytoplasm. The enzyme catalyses UDP-N-acetyl-alpha-D-muramate + NADP(+) = UDP-N-acetyl-3-O-(1-carboxyvinyl)-alpha-D-glucosamine + NADPH + H(+). Its pathway is cell wall biogenesis; peptidoglycan biosynthesis. Cell wall formation. The chain is UDP-N-acetylenolpyruvoylglucosamine reductase 2 (murB2) from Bacillus anthracis.